The following is a 477-amino-acid chain: Mitochondrial adenyl nucleotide antiporter SLC25A24 (477 aa).

The tract at residues 1-173 is regulatory N-terminal domain; sequence MLRWLRGFVL…RFWKHSTGID (173 aa). Over 1-197 the chain is Mitochondrial intermembrane; it reads MLRWLRGFVL…EKKSGQWWRQ (197 aa). EF-hand domains lie at 19 to 54, 61 to 85, 86 to 121, and 122 to 157; these read EPPT…LGIP, EKIF…KYLK, DHEK…LGLT, and ISEQ…NPVT. The Ca(2+) site is built by aspartate 32, asparagine 34, aspartate 36, valine 38, glutamate 43, aspartate 68, asparagine 70, aspartate 72, lysine 74, glutamate 79, aspartate 99, asparagine 101, aspartate 103, lysine 105, glutamate 110, aspartate 135, aspartate 137, threonine 139, threonine 141, and glutamate 146. Residues 159–168 are linker region; sequence IEEIIRFWKH. The segment at 174–477 is C-terminal transmembrane transporter domain; it reads IGDSLTIPDE…MKQTLGVTQK (304 aa). Solcar repeat units lie at residues 192–278, 286–371, and 383–471; these read GQWW…YKKL, IGTF…LKSH, and PGVM…MKQT. A helical transmembrane segment spans residues 198-215; the sequence is LLAGGVAGAVSRTSTAPL. The Mitochondrial matrix segment spans residues 216-252; that stretch reads DRLKVMMQVHGSKSAKMNIYGGFQQMVKEGGIRSLWR. Residues 253-272 traverse the membrane as a helical segment; it reads GNGTNVIKIAPETAVKFWAY. The Mitochondrial intermembrane segment spans residues 273 to 295; the sequence is EQYKKLLTEEGQKIGTFERFVSG. A helical membrane pass occupies residues 296–309; sequence SMAGATAQTFIYPM. The Mitochondrial matrix segment spans residues 310–345; it reads EVLKTRLAVGKTGQYSGMFDCAKKILKYEGMGAFYK. Position 320 is an N6-acetyllysine; alternate (lysine 320). Lysine 320 is subject to N6-succinyllysine; alternate. An N6-acetyllysine modification is found at lysine 336. Residues 346–365 traverse the membrane as a helical segment; it reads GYVPNLLGIIPYAGIDLAVY. Topologically, residues 366–388 are mitochondrial intermembrane; sequence ELLKSHWLDNFAKDSVNPGVMVL. Residues 389-406 form a helical membrane-spanning segment; sequence LGCGALSSTCGQLASYPL. At 407–445 the chain is on the mitochondrial matrix side; that stretch reads ALVRTRMQAQAMIEKSPQLNMVGLFRRILSKEGLPGLYR. Position 437 is an N6-acetyllysine; alternate (lysine 437). Lysine 437 is modified (N6-succinyllysine; alternate). A helical membrane pass occupies residues 446–465; that stretch reads GITPNFMKVLPAVGISYVVY. The Mitochondrial intermembrane segment spans residues 466-477; the sequence is ENMKQTLGVTQK.

It belongs to the mitochondrial carrier (TC 2.A.29) family. In terms of assembly, monomer.

It is found in the mitochondrion inner membrane. The enzyme catalyses Mg(2+)(out) + phosphate(in) + ATP(out) = Mg(2+)(in) + phosphate(out) + ATP(in). The catalysed reaction is ADP(out) + phosphate(in) + H(+)(out) = ADP(in) + phosphate(out) + H(+)(in). It carries out the reaction AMP(out) + phosphate(in) = AMP(in) + phosphate(out). It catalyses the reaction phosphate(in) + ATP(out) + 2 H(+)(out) = phosphate(out) + ATP(in) + 2 H(+)(in). The enzyme catalyses dADP(in) + ADP(out) = dADP(out) + ADP(in). The catalysed reaction is Mg(2+)(in) + ADP(out) + ATP(in) + H(+)(out) = Mg(2+)(out) + ADP(in) + ATP(out) + H(+)(in). It carries out the reaction ADP(out) + diphosphate(in) = ADP(in) + diphosphate(out). It catalyses the reaction dAMP(in) + ADP(out) + H(+)(out) = dAMP(out) + ADP(in) + H(+)(in). The enzyme catalyses 3'-AMP(in) + ADP(out) + H(+)(out) = 3'-AMP(out) + ADP(in) + H(+)(in). The catalysed reaction is dAMP(out) + phosphate(in) = dAMP(in) + phosphate(out). It carries out the reaction 3'-AMP(out) + phosphate(in) = 3'-AMP(in) + phosphate(out). It catalyses the reaction dADP(out) + phosphate(in) + H(+)(out) = dADP(in) + phosphate(out) + H(+)(in). Activated by an increase in cytosolic calcium levels that induce a conformational change of the N-terminal regulatory domain, uncapping the channel and allowing transport. Inhibited by bathophenanthroline, mersalyl, p-hydroxymercuribenzoate, bromcresol purple and tannic acid. Its function is as follows. Electroneutral antiporter that mediates the transport of adenyl nucleotides through the inner mitochondrial membrane. Originally identified as an ATP-magnesium/inorganic phosphate antiporter, it also acts as a broad specificity adenyl nucleotide antiporter. By regulating the mitochondrial matrix adenyl nucleotide pool could adapt to changing cellular energetic demands and indirectly regulate adenyl nucleotide-dependent metabolic pathways. In vitro, a low activity is also observed with guanyl and pyrimidine nucleotides. May play a role in protecting cells against oxidative stress-induced cell death, by buffering calcium levels in the mitochondrial matrix through the formation of calcium-phosphate precipitates. The polypeptide is Mitochondrial adenyl nucleotide antiporter SLC25A24 (SLC25A24) (Bos taurus (Bovine)).